The following is a 427-amino-acid chain: ATP-sensitive inward rectifier potassium channel 12 (427 aa).

The Cytoplasmic segment spans residues 1–77 (MTASGRTNPY…LADMFTTCVD (77 aa)). S-nitrosocysteine is present on Cys-75. A helical membrane pass occupies residues 78–104 (IRWRYMLLIFSLAFLASWLLFGVIFWV). Positions 79 and 81 each coordinate a 1,2-diacyl-sn-glycero-3-phospho-(1D-myo-inositol-4,5-bisphosphate). Residues 105-129 (IAVAHGDLEPAEAHGRTPCVLQVHG) are Extracellular-facing. Cys-123 and Cys-155 are oxidised to a cystine. The helical; Pore-forming intramembrane region spans 130–146 (FMAAFLFSIETQTTIGY). The K(+) site is built by Thr-143, Ile-144, Gly-145, and Tyr-146. The Selectivity filter motif lies at 143 to 148 (TIGYGL). Over 147 to 155 (GLRCVTEEC) the chain is Extracellular. The helical transmembrane segment at 156-183 (PVAVFMVVAQSIVGCIIDSFMIGAIMAK) threads the bilayer. A 1,2-diacyl-sn-glycero-3-phospho-(1D-myo-inositol-4,5-bisphosphate) contacts are provided by Lys-183 and Lys-188. Residues 184–427 (MARPKKRAQT…QRPYRRESEI (244 aa)) lie on the Cytoplasmic side of the membrane. A compositionally biased stretch (acidic residues) spans 387 to 396 (DEEDEVDGEQ). The interval 387–427 (DEEDEVDGEQDSLGPQARRDFDRPQAGTALEQRPYRRESEI) is disordered. A PDZ-binding motif is present at residues 425-427 (SEI).

Belongs to the inward rectifier-type potassium channel (TC 1.A.2.1) family. KCNJ12 subfamily. As to quaternary structure, homotetramer. Forms heteromer with KCNJ4. Association, via its PDZ-recognition domain, with LIN7A, LIN7B, LIN7C, DLG1, CASK and APBA1 plays a key role in its localization and trafficking.

The protein localises to the membrane. It carries out the reaction K(+)(in) = K(+)(out). Activated by phosphatidylinositol 4,5-biphosphate (PtdIns(4,5)P2). PtdIns(4,5)P2 binding to the cytoplasmic side of the channel triggers a conformation change leading to channel opening. Functionally, inward rectifying potassium channel that probably participates in controlling the resting membrane potential in electrically excitable cells. Probably participates in establishing action potential waveform and excitability of neuronal and muscle tissues. Inward rectifier potassium channels are characterized by a greater tendency to allow potassium to flow into the cell rather than out of it. Their voltage dependence is regulated by the concentration of extracellular potassium; as external potassium is raised, the voltage range of the channel opening shifts to more positive voltages. The inward rectification is mainly due to the blockage of outward current by internal magnesium. The polypeptide is ATP-sensitive inward rectifier potassium channel 12 (KCNJ12) (Bos taurus (Bovine)).